Here is a 1268-residue protein sequence, read N- to C-terminus: Vigilin (1268 aa).

Ser-2 carries the N-acetylserine modification. Residue Thr-8 is modified to Phosphothreonine. Residues Ser-11, Ser-31, and Ser-35 each carry the phosphoserine modification. KH domains lie at 150-212 (QASA…RHEV), 222-284 (RAVK…VARI), 295-357 (TTTI…LTEV), 364-424 (FTVS…QEQI), 435-497 (MDYV…KREL), 507-570 (ERTK…TKYM), and 581-643 (SYSI…RSRI). A phosphothreonine mark is found at Thr-295 and Thr-296. Ser-317 bears the Phosphoserine mark. Tyr-437 carries the post-translational modification Phosphotyrosine. At Ser-645 the chain carries Phosphoserine. 7 consecutive KH domains span residues 653-716 (IAEV…KKQL), 727-790 (SFTV…QKEL), 800-863 (VVED…KKRI), 873-967 (QVTL…KEAL), 972-1034 (PVTI…KAGL), 1052-1117 (SFKL…RDAI), and 1127-1190 (MVSE…IDHI). The disordered stretch occupies residues 910–946 (PDREENPVHSVEPSIQENGDEAGEGREAKETDPGSPR). Basic and acidic residues predominate over residues 932–946 (GEGREAKETDPGSPR). Lys-991 carries the post-translational modification N6-acetyllysine. Residues 1214–1268 (PAHEESKAPSKGFVVRDAPWTSNSSEKAPDMSSSEEIPTFGAQVAPKTLPWGPKR) are disordered. A compositionally biased stretch (polar residues) spans 1233–1249 (WTSNSSEKAPDMSSSEE). Ser-1247 is modified (phosphoserine).

The protein resides in the cytoplasm. It is found in the nucleus. Functionally, appears to play a role in cell sterol metabolism. It may function to protect cells from over-accumulation of cholesterol. The sequence is that of Vigilin (Hdlbp) from Rattus norvegicus (Rat).